Reading from the N-terminus, the 362-residue chain is 3-dehydroquinate synthase (362 aa).

NAD(+)-binding positions include Asp70–Lys75, Gly104–Asp108, Thr128–Thr129, Lys141, and Lys150. Glu183, His246, and His263 together coordinate Zn(2+).

The protein belongs to the sugar phosphate cyclases superfamily. Dehydroquinate synthase family. NAD(+) is required as a cofactor. Co(2+) serves as cofactor. It depends on Zn(2+) as a cofactor.

It is found in the cytoplasm. The catalysed reaction is 7-phospho-2-dehydro-3-deoxy-D-arabino-heptonate = 3-dehydroquinate + phosphate. Its pathway is metabolic intermediate biosynthesis; chorismate biosynthesis; chorismate from D-erythrose 4-phosphate and phosphoenolpyruvate: step 2/7. In terms of biological role, catalyzes the conversion of 3-deoxy-D-arabino-heptulosonate 7-phosphate (DAHP) to dehydroquinate (DHQ). This Pasteurella multocida (strain Pm70) protein is 3-dehydroquinate synthase.